A 225-amino-acid polypeptide reads, in one-letter code: MDYRKLHGWDLSPEEAIKVQNELRKKIKLVPYEGEPEYVAGVDLSFPGKKEGLAVIVVLEYPSFRIVEIVSERGEITFPYIPGLLAFREGPLFLKAWEKLRTKPDVVVFDGQGLAHPRKLGIASHMGLFIEIPTIGVAKSRLYGTFKMPEDKRCSWSYLYDGEEIIGCVVRTKEGSAPVFVSPGHLMDVESSKRLVKAFTLPGRRIPEPTRLAHIYTQRLKKGLF.

Mg(2+)-binding residues include D43 and D110.

Belongs to the endonuclease V family. It depends on Mg(2+) as a cofactor.

The protein localises to the cytoplasm. It catalyses the reaction Endonucleolytic cleavage at apurinic or apyrimidinic sites to products with a 5'-phosphate.. DNA repair enzyme involved in the repair of deaminated bases. Selectively cleaves double-stranded DNA at the second phosphodiester bond 3' to a deoxyinosine leaving behind the intact lesion on the nicked DNA. This Thermotoga sp. (strain RQ2) protein is Endonuclease V.